The following is a 916-amino-acid chain: DNA mismatch repair protein MutS (916 aa).

Positions 1-47 (MSEALSVPAAEGENTVTASESPDLAATSARAEKVGKQEKPEKAEKQS) are disordered. Over residues 30-45 (RAEKVGKQEKPEKAEK) the composition is skewed to basic and acidic residues. An ATP-binding site is contributed by 656 to 663 (GPNMGGKS). Polar residues predominate over residues 843–861 (ADATPTPQMDLFSAQSSPS). A disordered region spans residues 843-880 (ADATPTPQMDLFSAQSSPSADDEDDKSAGQSAVPPAQA).

This sequence belongs to the DNA mismatch repair MutS family.

In terms of biological role, this protein is involved in the repair of mismatches in DNA. It is possible that it carries out the mismatch recognition step. This protein has a weak ATPase activity. This is DNA mismatch repair protein MutS from Cupriavidus metallidurans (strain ATCC 43123 / DSM 2839 / NBRC 102507 / CH34) (Ralstonia metallidurans).